A 901-amino-acid polypeptide reads, in one-letter code: Alpha-actinin-3 (901 aa).

Methionine 1 is subject to N-acetylmethionine. The interval 1 to 261 (MMMVMQPEGL…IMTYVSCFYH (261 aa)) is actin-binding. 2 Calponin-homology (CH) domains span residues 45–149 (KQQR…LRFA) and 158–264 (TSAK…HAFA). Spectrin repeat units follow at residues 288 to 398 (KLME…WLLS), 408 to 513 (HLAE…ALER), 523 to 634 (RLQL…TLQE), and 644 to 747 (RLRR…EVEN). EF-hand domains are found at residues 760–795 (EQLN…MGYD) and 796–831 (LGEV…ETAE). Ca(2+) is bound by residues aspartate 773, asparagine 777, methionine 779, aspartate 784, aspartate 809, and asparagine 811.

The protein belongs to the alpha-actinin family. As to quaternary structure, homodimer; antiparallel. Also forms heterodimers with ACTN2. Interacts with MYOZ1. As to expression, expression restricted to fast (type 2) skeletal muscle fibers (at protein level).

Its function is as follows. F-actin cross-linking protein which is thought to anchor actin to a variety of intracellular structures. This is a bundling protein. In Homo sapiens (Human), this protein is Alpha-actinin-3 (ACTN3).